The primary structure comprises 123 residues: uncharacterized protein (123 aa).

The interval 35–100 is disordered; it reads SQDHGDDPAE…SSGAPASQHC (66 aa). A compositionally biased stretch (basic and acidic residues) spans 37–48; it reads DHGDDPAERGRT. Over residues 85–97 the composition is skewed to low complexity; the sequence is ALPASPSSGAPAS.

This is an uncharacterized protein from Homo sapiens (Human).